The sequence spans 542 residues: Excitatory amino acid transporter 1 (542 aa).

The Cytoplasmic segment spans residues 1-47; sequence MTKSNGEEARLGGRMERFQQGVRKRTLLAKKKVQNITKEDVKSYLFR. Residues 48–68 form a helical membrane-spanning segment; the sequence is NAFVLLTVTAVIVGTILGFTL. Residues 69–86 are Extracellular-facing; it reads RPYRMSYREVKYFSFPGE. The chain crosses the membrane as a helical span at residues 87–108; it reads LLMRMLQMLVLPLIISSLVTGM. Over 109–122 the chain is Cytoplasmic; the sequence is AALDSKASGKMGMR. Residues 123-145 traverse the membrane as a helical segment; it reads AVVYYMTTTIIAVVIGIIIVIII. The Extracellular portion of the chain corresponds to 146 to 236; it reads HPGKGTKENM…ITEELVPVPG (91 aa). Residues 237-260 form a helical membrane-spanning segment; the sequence is SVNGVNALGLVVFSMCFGFVIGNM. Residues 261 to 269 lie on the Cytoplasmic side of the membrane; that stretch reads KEQGQALRE. Residues 270 to 297 traverse the membrane as a helical segment; that stretch reads FFDSLNEAIMRLVAVIMWYAPLGILFLI. The Extracellular portion of the chain corresponds to 298–318; that stretch reads AGKIVEMEDMGVIGGQLAMYT. A helical membrane pass occupies residues 319 to 340; sequence VTVIVGLLIHAVIVLPLLYFLV. Topologically, residues 341–345 are cytoplasmic; sequence TRKNP. An intramembrane region (discontinuously helical) is located at residues 346–376; the sequence is WVFIGGLLQALITALGTSSSSATLPITFKCL. Position 363 to 365 (363 to 365) interacts with L-aspartate; sequence SSS. At 377 to 385 the chain is on the cytoplasmic side; the sequence is EENNGVDKR. A helical membrane pass occupies residues 386 to 412; sequence VTRFVLPVGATINMDGTALYEALAAIF. Positions 394, 396, and 398 each coordinate Na(+). Position 402 (T402) interacts with L-aspartate. Residues 413 to 425 lie on the Extracellular side of the membrane; sequence IAQVNNFELNFGQ. An intramembrane region (discontinuously helical) is located at residues 426 to 459; that stretch reads IITISITATAASIGAAGIPQAGLVTMVIVLTSVG. 443–447 is a binding site for L-aspartate; the sequence is IPQAG. The Extracellular segment spans residues 460 to 472; it reads LPTDDITLIIAVD. A helical membrane pass occupies residues 473–494; that stretch reads WFLDRLRTTTNVLGDSLGAGIV. L-aspartate contacts are provided by D476 and N483. Na(+) contacts are provided by N483 and D487. Over 495 to 542 the chain is Cytoplasmic; it reads EHLSRHELKNRDVEMGNSVIEENEMKKPYQLISQESEIEKSMDSETKM. Residue S512 is modified to Phosphoserine.

This sequence belongs to the dicarboxylate/amino acid:cation symporter (DAACS) (TC 2.A.23) family. SLC1A3 subfamily. Homotrimer. Glycosylated.

It is found in the cell membrane. It catalyses the reaction K(+)(in) + L-glutamate(out) + 3 Na(+)(out) + H(+)(out) = K(+)(out) + L-glutamate(in) + 3 Na(+)(in) + H(+)(in). The catalysed reaction is K(+)(in) + L-aspartate(out) + 3 Na(+)(out) + H(+)(out) = K(+)(out) + L-aspartate(in) + 3 Na(+)(in) + H(+)(in). It carries out the reaction D-aspartate(out) + K(+)(in) + 3 Na(+)(out) + H(+)(out) = D-aspartate(in) + K(+)(out) + 3 Na(+)(in) + H(+)(in). Functionally, sodium-dependent, high-affinity amino acid transporter that mediates the uptake of L-glutamate and also L-aspartate and D-aspartate. Functions as a symporter that transports one amino acid molecule together with two or three Na(+) ions and one proton, in parallel with the counter-transport of one K(+) ion. Plays a redundant role in the rapid removal of released glutamate from the synaptic cleft, which is essential for terminating the postsynaptic action of glutamate. The sequence is that of Excitatory amino acid transporter 1 (SLC1A3) from Bos taurus (Bovine).